Reading from the N-terminus, the 529-residue chain is 2-(3-amino-3-carboxypropyl)histidine synthase subunit 2-2 (529 aa).

[4Fe-4S] cluster is bound by residues Cys-130, Cys-151, and Cys-366.

The protein belongs to the DPH1/DPH2 family. DPH2 subfamily. In terms of assembly, component of the 2-(3-amino-3-carboxypropyl)histidine synthase complex composed of DPH1, DPH2, DPH3 and a NADH-dependent reductase, predominantly CBR1. Requires [4Fe-4S] cluster as cofactor.

The protein resides in the cytoplasm. Its pathway is protein modification; peptidyl-diphthamide biosynthesis. Functionally, required for the first step of diphthamide biosynthesis, a post-translational modification of histidine which occurs in elongation factor 2. DPH1 and DPH2 transfer a 3-amino-3-carboxypropyl (ACP) group from S-adenosyl-L-methionine (SAM) to a histidine residue, the reaction is assisted by a reduction system comprising DPH3 and a NADH-dependent reductase, predominantly CBR1. Facilitates the reduction of the catalytic iron-sulfur cluster found in the DPH1 subunit. The protein is 2-(3-amino-3-carboxypropyl)histidine synthase subunit 2-2 of Candida albicans (strain SC5314 / ATCC MYA-2876) (Yeast).